A 305-amino-acid polypeptide reads, in one-letter code: 4-diphosphocytidyl-2-C-methyl-D-erythritol kinase (305 aa).

Lysine 10 is a catalytic residue. Position 95 to 105 (95 to 105 (PVTAGLGGGSS)) interacts with ATP. The active site involves aspartate 136. The interval 286–305 (PGVTPWRSPRSASSPSTKRS) is disordered. A compositionally biased stretch (low complexity) spans 290 to 305 (PWRSPRSASSPSTKRS).

The protein belongs to the GHMP kinase family. IspE subfamily.

It carries out the reaction 4-CDP-2-C-methyl-D-erythritol + ATP = 4-CDP-2-C-methyl-D-erythritol 2-phosphate + ADP + H(+). It participates in isoprenoid biosynthesis; isopentenyl diphosphate biosynthesis via DXP pathway; isopentenyl diphosphate from 1-deoxy-D-xylulose 5-phosphate: step 3/6. In terms of biological role, catalyzes the phosphorylation of the position 2 hydroxy group of 4-diphosphocytidyl-2C-methyl-D-erythritol. This chain is 4-diphosphocytidyl-2-C-methyl-D-erythritol kinase, found in Anaeromyxobacter sp. (strain Fw109-5).